Consider the following 522-residue polypeptide: Putative aminopeptidase W07G4.4 (522 aa).

Positions 271 and 276 each coordinate Zn(2+). Lys283 is a catalytic residue. 3 residues coordinate Zn(2+): Asp294, Asp354, and Glu356. Residue Arg358 is part of the active site.

It belongs to the peptidase M17 family. Requires Zn(2+) as cofactor.

This chain is Putative aminopeptidase W07G4.4 (lap-2), found in Caenorhabditis elegans.